The chain runs to 525 residues: Allantoate deiminase (525 aa).

A signal peptide spans M1–S53. The segment covering S56–L75 has biased composition (low complexity). Residues S56–G78 are disordered. N-linked (GlcNAc...) asparagine glycosylation occurs at N156. Positions 167, 178, 215, 281, and 499 each coordinate Mn(2+).

It belongs to the peptidase M20A family. As to quaternary structure, homodimer. Requires Mn(2+) as cofactor. In terms of tissue distribution, expressed in seedlings, roots, stems, leaves, flowers, siliques and seeds.

It localises to the endoplasmic reticulum. It catalyses the reaction allantoate + H2O + 2 H(+) = (S)-2-ureidoglycine + NH4(+) + CO2. Inhibited by borate, fluoride, L-Asn and L-Asp, but not by phenylphosphorodiamidate. Its function is as follows. Involved in the catabolism of purine nucleotides. Can use allantoate as substrate, but not Nalpha-carbamoyl-L-Asp, Nalpha-carbamoyl-L-Ala or Nalpha-carbamoyl-Gly. The sequential activity of AAH, UGLYAH and UAH allows a complete purine breakdown without the intermediate generation of urea. Involved in the regulation of seed maturation and seed dormancy. In Arabidopsis thaliana (Mouse-ear cress), this protein is Allantoate deiminase.